The following is a 103-amino-acid chain: Large ribosomal subunit protein bL21 (103 aa).

Belongs to the bacterial ribosomal protein bL21 family. As to quaternary structure, part of the 50S ribosomal subunit. Contacts protein L20.

Its function is as follows. This protein binds to 23S rRNA in the presence of protein L20. The polypeptide is Large ribosomal subunit protein bL21 (Tolumonas auensis (strain DSM 9187 / NBRC 110442 / TA 4)).